The sequence spans 153 residues: NADH dehydrogenase [ubiquinone] 1 beta subcomplex subunit 11, mitochondrial (153 aa).

Residues 1-29 constitute a mitochondrion transit peptide; sequence MAAGLFGLSARRLLAAAATRGLPAARVRW. The segment at 40-76 is disordered; the sequence is PSAVAGKRPPEPTTPWQEDPEPEDENLYEKNPDSHGY. Residues 66–76 show a composition bias toward basic and acidic residues; that stretch reads LYEKNPDSHGY. A helical transmembrane segment spans residues 89–109; that stretch reads LVFFFGVSIILVLGSTFVAYL.

It belongs to the complex I NDUFB11 subunit family. Complex I is composed of 45 different subunits. Interacts with BCAP31. In terms of tissue distribution, ubiquitous.

The protein localises to the mitochondrion inner membrane. Accessory subunit of the mitochondrial membrane respiratory chain NADH dehydrogenase (Complex I), that is believed not to be involved in catalysis. Complex I functions in the transfer of electrons from NADH to the respiratory chain. The immediate electron acceptor for the enzyme is believed to be ubiquinone. In Homo sapiens (Human), this protein is NADH dehydrogenase [ubiquinone] 1 beta subcomplex subunit 11, mitochondrial (NDUFB11).